Consider the following 398-residue polypeptide: S-adenosylmethionine synthase (398 aa).

ATP is bound at residue His16. Mg(2+) is bound at residue Asp18. A K(+)-binding site is contributed by Glu51. L-methionine-binding residues include Glu64 and Gln108. A flexible loop region spans residues 108–118 (QSADIAQGVDA). Residues 176–178 (DSK), 242–243 (KF), Asp251, 257–258 (RK), Ala274, and Lys278 each bind ATP. Residue Asp251 coordinates L-methionine. Lys282 contacts L-methionine.

The protein belongs to the AdoMet synthase family. Homotetramer; dimer of dimers. Mg(2+) is required as a cofactor. The cofactor is K(+).

The protein localises to the cytoplasm. The enzyme catalyses L-methionine + ATP + H2O = S-adenosyl-L-methionine + phosphate + diphosphate. It functions in the pathway amino-acid biosynthesis; S-adenosyl-L-methionine biosynthesis; S-adenosyl-L-methionine from L-methionine: step 1/1. Functionally, catalyzes the formation of S-adenosylmethionine (AdoMet) from methionine and ATP. The overall synthetic reaction is composed of two sequential steps, AdoMet formation and the subsequent tripolyphosphate hydrolysis which occurs prior to release of AdoMet from the enzyme. This Nitrobacter hamburgensis (strain DSM 10229 / NCIMB 13809 / X14) protein is S-adenosylmethionine synthase.